Here is a 303-residue protein sequence, read N- to C-terminus: Taste receptor type 2 member 13 (303 aa).

Over 1–7 the chain is Extracellular; it reads MESALLS. A helical membrane pass occupies residues 8 to 28; sequence ILTLVIIAEFVIGNLSNGFXV. At 29–55 the chain is on the cytoplasmic side; sequence LINCIDWVSKRQLSSVDKILTFLAISR. Residues 56–76 form a helical membrane-spanning segment; that stretch reads IGLIWELLVSWFLGLHYLAIF. At 77-85 the chain is on the extracellular side; the sequence is VSGTGLRIM. Residues 86–106 form a helical membrane-spanning segment; sequence IFSWVVSNHFSLWLATILSIF. The Cytoplasmic segment spans residues 107–128; it reads YLLKIASFSSPAFLYLKWRVNQ. The chain crosses the membrane as a helical span at residues 129–149; sequence VILMILLGTLVFLFLNLIQIN. Residues 150-184 are Extracellular-facing; it reads IHIKDWLDRCERNTIWNFSMSGLPTFSVPVKFTMT. N-linked (GlcNAc...) asparagine glycosylation occurs at Asn-166. Residues 185–205 traverse the membrane as a helical segment; that stretch reads MFSLAPFTVALISFLLLIFSL. The Cytoplasmic segment spans residues 206-232; sequence RKHLQKMQLNYKGHREPRTKAHINALK. The chain crosses the membrane as a helical span at residues 233-253; the sequence is IVISFLLLYASFFLCILISWI. The Extracellular segment spans residues 254-261; that stretch reads SELYQNTL. Residues 262-282 traverse the membrane as a helical segment; that stretch reads IHMFCQTIGVFYPSSHSFLLI. At 283 to 303 the chain is on the cytoplasmic side; the sequence is LGNPKLRQASLLVAAKVWAKR.

It belongs to the G-protein coupled receptor T2R family.

The protein localises to the membrane. Its function is as follows. Receptor that may play a role in the perception of bitterness and is gustducin-linked. May play a role in sensing the chemical composition of the gastrointestinal content. The activity of this receptor may stimulate alpha gustducin, mediate PLC-beta-2 activation and lead to the gating of TRPM5. This is Taste receptor type 2 member 13 (TAS2R13) from Papio hamadryas (Hamadryas baboon).